The primary structure comprises 179 residues: MLRFKELYQQKIIENLQKNFSYKNKHEIPQIKKIVINMGVGEATADSKVINNAVNDLTLISGQKPVVTLARKSIATFKLRENMKIGCKVTLRKDRMYDFLERLVIVALPRVKEFRGFSYKSFDGKGNFTFGLKEQIVFPEINYDKIDTIRGMDITIVTSAKTDQESKFLLSGFNLPFYN.

Belongs to the universal ribosomal protein uL5 family. Part of the 50S ribosomal subunit; part of the 5S rRNA/L5/L18/L25 subcomplex. Contacts the 5S rRNA and the P site tRNA. Forms a bridge to the 30S subunit in the 70S ribosome.

Its function is as follows. This is one of the proteins that bind and probably mediate the attachment of the 5S RNA into the large ribosomal subunit, where it forms part of the central protuberance. In the 70S ribosome it contacts protein S13 of the 30S subunit (bridge B1b), connecting the 2 subunits; this bridge is implicated in subunit movement. Contacts the P site tRNA; the 5S rRNA and some of its associated proteins might help stabilize positioning of ribosome-bound tRNAs. This Rickettsia peacockii (strain Rustic) protein is Large ribosomal subunit protein uL5.